A 138-amino-acid chain; its full sequence is MPNFSGNWKIIRSENFEDLLKVLGVNVMLRKIAVAAASKPAVEIKQEGDTFYIKTSTTVRTTEINFKIGEEFEEQTVDGRPCKSLVKWESENKMVCEQRLLKGEGPKTSWTRELTNDGELILTMTADDIVCTRVYVRE.

Positions 21–31 match the Nuclear localization signal motif; sequence KVLGVNVMLRK. Residue Lys-102 forms a Glycyl lysine isopeptide (Lys-Gly) (interchain with G-Cter in SUMO) linkage. 133 to 135 serves as a coordination point for all-trans-retinoate; sequence RVY.

This sequence belongs to the calycin superfamily. Fatty-acid binding protein (FABP) family. As to quaternary structure, interacts with importin alpha, RXR and RARA. In terms of processing, sumoylated in response to retinoic acid binding, sumoylation is critical for dissociation from ER and subsequent nuclear translocation.

It localises to the cytoplasm. The protein localises to the endoplasmic reticulum. Its subcellular location is the nucleus. Its function is as follows. Transports retinoic acid to the nucleus. Regulates the access of retinoic acid to the nuclear retinoic acid receptors. This Bos taurus (Bovine) protein is Cellular retinoic acid-binding protein 2 (CRABP2).